We begin with the raw amino-acid sequence, 85 residues long: Large ribosomal subunit protein bL27 (85 aa).

Positions 1–20 are disordered; sequence MATKKAGGSTRNGRDSEAKR.

This sequence belongs to the bacterial ribosomal protein bL27 family.

The protein is Large ribosomal subunit protein bL27 of Histophilus somni (strain 129Pt) (Haemophilus somnus).